Consider the following 253-residue polypeptide: Probable transcriptional regulatory protein RPR_05505 (253 aa).

It belongs to the TACO1 family.

Its subcellular location is the cytoplasm. The chain is Probable transcriptional regulatory protein RPR_05505 from Rickettsia peacockii (strain Rustic).